Here is a 396-residue protein sequence, read N- to C-terminus: Elongation factor Tu (396 aa).

A tr-type G domain is found at 10-206 (KPHVNVGTIG…ALDSYIPEPV (197 aa)). Positions 19 to 26 (GHIDHGKT) are G1. 19–26 (GHIDHGKT) provides a ligand contact to GTP. A Mg(2+)-binding site is contributed by T26. The tract at residues 60–64 (TKTVT) is G2. The G3 stretch occupies residues 83-86 (DCPG). GTP-binding positions include 83–87 (DCPGH) and 138–141 (NKCD). The segment at 138-141 (NKCD) is G4. Residues 176–178 (ASL) form a G5 region.

It belongs to the TRAFAC class translation factor GTPase superfamily. Classic translation factor GTPase family. EF-Tu/EF-1A subfamily. As to quaternary structure, monomer.

It is found in the cytoplasm. It carries out the reaction GTP + H2O = GDP + phosphate + H(+). In terms of biological role, GTP hydrolase that promotes the GTP-dependent binding of aminoacyl-tRNA to the A-site of ribosomes during protein biosynthesis. This is Elongation factor Tu from Sorangium cellulosum (strain So ce56) (Polyangium cellulosum (strain So ce56)).